A 181-amino-acid polypeptide reads, in one-letter code: CDP-archaeol synthase (181 aa).

The next 5 membrane-spanning stretches (helical) occupy residues 7–27 (VVWA…AVLA), 55–75 (LIGT…TPSV), 88–108 (LRAG…ASFL), 126–146 (LDFV…WFTE), and 147–167 (TFTL…HVVT).

The protein belongs to the CDP-archaeol synthase family. Mg(2+) serves as cofactor.

The protein resides in the cell membrane. The catalysed reaction is 2,3-bis-O-(geranylgeranyl)-sn-glycerol 1-phosphate + CTP + H(+) = CDP-2,3-bis-O-(geranylgeranyl)-sn-glycerol + diphosphate. It functions in the pathway membrane lipid metabolism; glycerophospholipid metabolism. In terms of biological role, catalyzes the formation of CDP-2,3-bis-(O-geranylgeranyl)-sn-glycerol (CDP-archaeol) from 2,3-bis-(O-geranylgeranyl)-sn-glycerol 1-phosphate (DGGGP) and CTP. This reaction is the third ether-bond-formation step in the biosynthesis of archaeal membrane lipids. The polypeptide is CDP-archaeol synthase (Haloarcula marismortui (strain ATCC 43049 / DSM 3752 / JCM 8966 / VKM B-1809) (Halobacterium marismortui)).